The sequence spans 304 residues: GTP cyclohydrolase FolE2 (304 aa).

It belongs to the GTP cyclohydrolase IV family.

The enzyme catalyses GTP + H2O = 7,8-dihydroneopterin 3'-triphosphate + formate + H(+). It functions in the pathway cofactor biosynthesis; 7,8-dihydroneopterin triphosphate biosynthesis; 7,8-dihydroneopterin triphosphate from GTP: step 1/1. In terms of biological role, converts GTP to 7,8-dihydroneopterin triphosphate. This Hahella chejuensis (strain KCTC 2396) protein is GTP cyclohydrolase FolE2.